The chain runs to 594 residues: Keratin, type II cytoskeletal 2 oral (594 aa).

The head stretch occupies residues 1 to 164; the sequence is MSRQACKKSF…DPQIGQVKAQ (164 aa). An omega-N-methylarginine mark is found at R85 and R104. Residues 165-200 form a coil 1A region; it reads EREQIKTLNNKFASFIDKVRFLEQQNKVLETKWELL. Residues 165–480 form the IF rod domain; that stretch reads EREQIKTLNN…KLLEGEECRL (316 aa). The linker 1 stretch occupies residues 201–221; it reads QQQTIRSGSGPQNLEPFFESY. A coil 1B region spans residues 222 to 313; sequence ISCLRKQLDS…TLYDMELSQI (92 aa). The interval 314–337 is linker 12; it reads QSHVSDTSVVLSMDNNRCLDLDSI. Residues 338-476 are coil 2; that stretch reads IAEVKAQYED…ATYRKLLEGE (139 aa). Residues 477–594 are tail; sequence ECRLSGEFQN…TTSSSQQRSK (118 aa). The segment at 497–594 is disordered; it reads TSTSSSGSFR…TTSSSQQRSK (98 aa). Residues 506–522 show a composition bias toward gly residues; that stretch reads RGTGGSNYGGDSSGRSG. Over residues 523-551 the composition is skewed to low complexity; sequence GSSSSSSRGSSSRGSSGSRLGSGGSISVS. R541 is subject to Omega-N-methylarginine. Over residues 552–564 the composition is skewed to polar residues; the sequence is QQRMGFNSGGSQT. Positions 565-594 are enriched in low complexity; it reads SVGSSYKSGRGGSSSVQFSQTTSSSQQRSK.

Belongs to the intermediate filament family. As to quaternary structure, heterotetramer of two type I and two type II keratins.

Functionally, probably contributes to terminal cornification. The polypeptide is Keratin, type II cytoskeletal 2 oral (Mus musculus (Mouse)).